Here is a 204-residue protein sequence, read N- to C-terminus: Glutathione S-transferase (204 aa).

The region spanning 3-80 (PSYKLTYCPV…YLGKQFGLSG (78 aa)) is the GST N-terminal domain. Residues Tyr9, Trp40, Lys44, 50-52 (GKT), and 64-65 (QS) each bind glutathione. One can recognise a GST C-terminal domain in the interval 82-204 (DDWENLEIDM…WVAKRPPTDL (123 aa)).

It belongs to the GST superfamily. Sigma family.

The catalysed reaction is RX + glutathione = an S-substituted glutathione + a halide anion + H(+). The sequence is that of Glutathione S-transferase from Blattella germanica (German cockroach).